A 295-amino-acid polypeptide reads, in one-letter code: 4-hydroxy-3-methylbut-2-enyl diphosphate reductase (295 aa).

Cys-12 is a binding site for [4Fe-4S] cluster. Residues His-43 and His-81 each coordinate (2E)-4-hydroxy-3-methylbut-2-enyl diphosphate. Dimethylallyl diphosphate-binding residues include His-43 and His-81. Isopentenyl diphosphate-binding residues include His-43 and His-81. Residue Cys-103 participates in [4Fe-4S] cluster binding. Residue His-131 coordinates (2E)-4-hydroxy-3-methylbut-2-enyl diphosphate. His-131 contacts dimethylallyl diphosphate. Residue His-131 participates in isopentenyl diphosphate binding. Catalysis depends on Glu-133, which acts as the Proton donor. A (2E)-4-hydroxy-3-methylbut-2-enyl diphosphate-binding site is contributed by Thr-171. [4Fe-4S] cluster is bound at residue Cys-199. The (2E)-4-hydroxy-3-methylbut-2-enyl diphosphate site is built by Ser-227, Asn-229, and Ser-272. Dimethylallyl diphosphate contacts are provided by Ser-227, Asn-229, and Ser-272. 3 residues coordinate isopentenyl diphosphate: Ser-227, Asn-229, and Ser-272.

It belongs to the IspH family. [4Fe-4S] cluster serves as cofactor.

It catalyses the reaction isopentenyl diphosphate + 2 oxidized [2Fe-2S]-[ferredoxin] + H2O = (2E)-4-hydroxy-3-methylbut-2-enyl diphosphate + 2 reduced [2Fe-2S]-[ferredoxin] + 2 H(+). It carries out the reaction dimethylallyl diphosphate + 2 oxidized [2Fe-2S]-[ferredoxin] + H2O = (2E)-4-hydroxy-3-methylbut-2-enyl diphosphate + 2 reduced [2Fe-2S]-[ferredoxin] + 2 H(+). It functions in the pathway isoprenoid biosynthesis; dimethylallyl diphosphate biosynthesis; dimethylallyl diphosphate from (2E)-4-hydroxy-3-methylbutenyl diphosphate: step 1/1. The protein operates within isoprenoid biosynthesis; isopentenyl diphosphate biosynthesis via DXP pathway; isopentenyl diphosphate from 1-deoxy-D-xylulose 5-phosphate: step 6/6. Functionally, catalyzes the conversion of 1-hydroxy-2-methyl-2-(E)-butenyl 4-diphosphate (HMBPP) into a mixture of isopentenyl diphosphate (IPP) and dimethylallyl diphosphate (DMAPP). Acts in the terminal step of the DOXP/MEP pathway for isoprenoid precursor biosynthesis. In Symbiobacterium thermophilum (strain DSM 24528 / JCM 14929 / IAM 14863 / T), this protein is 4-hydroxy-3-methylbut-2-enyl diphosphate reductase.